Reading from the N-terminus, the 344-residue chain is Heat-inducible transcription repressor HrcA (344 aa).

This sequence belongs to the HrcA family.

Its function is as follows. Negative regulator of class I heat shock genes (grpE-dnaK-dnaJ and groELS operons). Prevents heat-shock induction of these operons. The sequence is that of Heat-inducible transcription repressor HrcA from Streptococcus mutans serotype c (strain ATCC 700610 / UA159).